Consider the following 525-residue polypeptide: ATP synthase subunit alpha (525 aa).

169–176 (GDRQTGKT) contacts ATP.

It belongs to the ATPase alpha/beta chains family. As to quaternary structure, F-type ATPases have 2 components, CF(1) - the catalytic core - and CF(0) - the membrane proton channel. CF(1) has five subunits: alpha(3), beta(3), gamma(1), delta(1), epsilon(1). CF(0) has three main subunits: a(1), b(2) and c(9-12). The alpha and beta chains form an alternating ring which encloses part of the gamma chain. CF(1) is attached to CF(0) by a central stalk formed by the gamma and epsilon chains, while a peripheral stalk is formed by the delta and b chains.

The protein resides in the cell membrane. It catalyses the reaction ATP + H2O + 4 H(+)(in) = ADP + phosphate + 5 H(+)(out). Functionally, produces ATP from ADP in the presence of a proton gradient across the membrane. The alpha chain is a regulatory subunit. This is ATP synthase subunit alpha from Mycoplasma capricolum subsp. capricolum (strain California kid / ATCC 27343 / NCTC 10154).